Reading from the N-terminus, the 160-residue chain is 3-hydroxyacyl-[acyl-carrier-protein] dehydratase FabZ (160 aa).

His63 is a catalytic residue.

It belongs to the thioester dehydratase family. FabZ subfamily.

The protein localises to the cytoplasm. It carries out the reaction a (3R)-hydroxyacyl-[ACP] = a (2E)-enoyl-[ACP] + H2O. In terms of biological role, involved in unsaturated fatty acids biosynthesis. Catalyzes the dehydration of short chain beta-hydroxyacyl-ACPs and long chain saturated and unsaturated beta-hydroxyacyl-ACPs. The chain is 3-hydroxyacyl-[acyl-carrier-protein] dehydratase FabZ from Xylella fastidiosa (strain M23).